Consider the following 540-residue polypeptide: Phenylalanine--tRNA ligase beta subunit (540 aa).

A B5 domain is found at 268 to 342 (LRHTSVPFSL…MAYGYDRFTL (75 aa)). Mg(2+) is bound by residues aspartate 320, aspartate 326, glutamate 329, and aspartate 330.

This sequence belongs to the phenylalanyl-tRNA synthetase beta subunit family. Type 2 subfamily. Tetramer of two alpha and two beta subunits. Requires Mg(2+) as cofactor.

It localises to the cytoplasm. The catalysed reaction is tRNA(Phe) + L-phenylalanine + ATP = L-phenylalanyl-tRNA(Phe) + AMP + diphosphate + H(+). This chain is Phenylalanine--tRNA ligase beta subunit, found in Metallosphaera sedula (strain ATCC 51363 / DSM 5348 / JCM 9185 / NBRC 15509 / TH2).